A 251-amino-acid chain; its full sequence is 1-(5-phosphoribosyl)-5-[(5-phosphoribosylamino)methylideneamino] imidazole-4-carboxamide isomerase (251 aa).

Asp-8 (proton acceptor) is an active-site residue. Catalysis depends on Asp-131, which acts as the Proton donor.

It belongs to the HisA/HisF family.

It localises to the cytoplasm. It carries out the reaction 1-(5-phospho-beta-D-ribosyl)-5-[(5-phospho-beta-D-ribosylamino)methylideneamino]imidazole-4-carboxamide = 5-[(5-phospho-1-deoxy-D-ribulos-1-ylimino)methylamino]-1-(5-phospho-beta-D-ribosyl)imidazole-4-carboxamide. The protein operates within amino-acid biosynthesis; L-histidine biosynthesis; L-histidine from 5-phospho-alpha-D-ribose 1-diphosphate: step 4/9. This is 1-(5-phosphoribosyl)-5-[(5-phosphoribosylamino)methylideneamino] imidazole-4-carboxamide isomerase from Burkholderia cenocepacia (strain ATCC BAA-245 / DSM 16553 / LMG 16656 / NCTC 13227 / J2315 / CF5610) (Burkholderia cepacia (strain J2315)).